Reading from the N-terminus, the 408-residue chain is UDP-N-acetylglucosamine--dolichyl-phosphate N-acetylglucosaminephosphotransferase (408 aa).

A run of 2 helical transmembrane segments spans residues 6-26 (SLLG…IYLP) and 32-52 (WIIV…YKLI). Positions 68 and 84 each coordinate UDP-N-acetyl-alpha-D-glucosamine. Helical transmembrane passes span 87-107 (GICV…FQWF) and 120-140 (AALT…VLNL). Residue Lys-145 participates in dolichyl phosphate binding. The next 2 helical transmembrane spans lie at 147–167 (ILPM…TTVV) and 181–201 (LGVV…LAIF). 200-208 (IFCTNSINI) is a binding site for dolichyl phosphate. Asn-207 is a binding site for Mg(2+). Asn-213 is a UDP-N-acetyl-alpha-D-glucosamine binding site. 2 helical membrane passes run 221 to 241 (VVIA…ASSV) and 258 to 278 (HLFS…LLFY). Residue Asp-289 coordinates Mg(2+). The helical transmembrane segment at 297 to 317 (MCFAVVAILCHFSKTLLLFFI) threads the bilayer. Position 338 to 340 (338 to 340 (RHR)) interacts with UDP-N-acetyl-alpha-D-glucosamine. Transmembrane regions (helical) follow at residues 351–371 (MEAI…TGPL) and 376–396 (LCVY…GIRY).

It belongs to the glycosyltransferase 4 family. Homodimer. Requires Mg(2+) as cofactor.

It localises to the endoplasmic reticulum membrane. The enzyme catalyses a di-trans,poly-cis-dolichyl phosphate + UDP-N-acetyl-alpha-D-glucosamine = an N-acetyl-alpha-D-glucosaminyl-diphospho-di-trans,poly-cis-dolichol + UMP. It functions in the pathway protein modification; protein glycosylation. Inhibited by natural nucleoside antibiotic tunicamycin, which acts as a structural analog and competitor of UDP-GlcNAc. Its function is as follows. UDP-N-acetylglucosamine--dolichyl-phosphate N-acetylglucosaminephosphotransferase that operates in the biosynthetic pathway of dolichol-linked oligosaccharides, the glycan precursors employed in protein asparagine (N)-glycosylation. The assembly of dolichol-linked oligosaccharides begins on the cytosolic side of the endoplasmic reticulum membrane and finishes in its lumen. The sequential addition of sugars to dolichol pyrophosphate produces dolichol-linked oligosaccharides containing fourteen sugars, including two GlcNAcs, nine mannoses and three glucoses. Once assembled, the oligosaccharide is transferred from the lipid to nascent proteins by oligosaccharyltransferases. Catalyzes the initial step of dolichol-linked oligosaccharide biosynthesis, transfering GlcNAc-1-P from cytosolic UDP-GlcNAc onto the carrier lipid dolichyl phosphate (P-dolichol), yielding GlcNAc-P-P-dolichol embedded in the cytoplasmic leaflet of the endoplasmic reticulum membrane. This Dictyostelium discoideum (Social amoeba) protein is UDP-N-acetylglucosamine--dolichyl-phosphate N-acetylglucosaminephosphotransferase (alg7).